We begin with the raw amino-acid sequence, 298 residues long: Tyrosine recombinase XerC (298 aa).

One can recognise a Core-binding (CB) domain in the interval 1–84 (MNHIQEAFLN…TLRTFYEYWM (84 aa)). In terms of domain architecture, Tyr recombinase spans 105–286 (YLPQFFYEEE…SNQQLRKVYL (182 aa)). Catalysis depends on residues R145, K169, H238, R241, and H264. Y273 (O-(3'-phospho-DNA)-tyrosine intermediate) is an active-site residue.

Belongs to the 'phage' integrase family. XerC subfamily. Forms a cyclic heterotetrameric complex composed of two molecules of XerC and two molecules of XerD.

It localises to the cytoplasm. Site-specific tyrosine recombinase, which acts by catalyzing the cutting and rejoining of the recombining DNA molecules. The XerC-XerD complex is essential to convert dimers of the bacterial chromosome into monomers to permit their segregation at cell division. It also contributes to the segregational stability of plasmids. The polypeptide is Tyrosine recombinase XerC (Staphylococcus aureus (strain Mu3 / ATCC 700698)).